The chain runs to 626 residues: Chaperone protein HtpG (626 aa).

Residues 1 to 339 form an a; substrate-binding region; it reads MSQNQETRGF…SNDLPLNVSR (339 aa). Residues 340-555 form a b region; it reads EILQDNKITA…NDQMTTQMAK (216 aa). Residues 556–626 are c; it reads LFAAAGQPVP…FIKRINKLLG (71 aa).

Belongs to the heat shock protein 90 family. As to quaternary structure, homodimer.

It is found in the cytoplasm. Molecular chaperone. Has ATPase activity. In Haemophilus influenzae (strain 86-028NP), this protein is Chaperone protein HtpG.